Reading from the N-terminus, the 98-residue chain is MATRFMTDPHAMRDMAGRFEVHAQTVEDEARRMWASAQNISGAGWSGMAEATSLDTMAQMNQAFRNIVNMLHGVRDGLVRDANNYEQQEQASQQILSS.

Belongs to the WXG100 family. CFP-10 subfamily. As to quaternary structure, strongly interacts with EsxL to form a heterodimeric complex under reducing conditions.

It localises to the secreted. The chain is ESAT-6-like protein EsxK from Mycobacterium tuberculosis (strain CDC 1551 / Oshkosh).